The following is a 214-amino-acid chain: Pyridoxine/pyridoxamine 5'-phosphate oxidase (214 aa).

Substrate is bound by residues Arg-9–Tyr-12 and Lys-67. Residues Arg-62–Lys-67, Tyr-77–Thr-78, Lys-84, and Gln-106 contribute to the FMN site. 3 residues coordinate substrate: Tyr-124, Arg-128, and Ser-132. FMN-binding positions include Gln-141–Ser-142 and Trp-186. Position 192–194 (Arg-192–His-194) interacts with substrate. Position 196 (Arg-196) interacts with FMN.

This sequence belongs to the pyridoxamine 5'-phosphate oxidase family. Homodimer. It depends on FMN as a cofactor.

It carries out the reaction pyridoxamine 5'-phosphate + O2 + H2O = pyridoxal 5'-phosphate + H2O2 + NH4(+). The catalysed reaction is pyridoxine 5'-phosphate + O2 = pyridoxal 5'-phosphate + H2O2. It functions in the pathway cofactor metabolism; pyridoxal 5'-phosphate salvage; pyridoxal 5'-phosphate from pyridoxamine 5'-phosphate: step 1/1. Its pathway is cofactor metabolism; pyridoxal 5'-phosphate salvage; pyridoxal 5'-phosphate from pyridoxine 5'-phosphate: step 1/1. In terms of biological role, catalyzes the oxidation of either pyridoxine 5'-phosphate (PNP) or pyridoxamine 5'-phosphate (PMP) into pyridoxal 5'-phosphate (PLP). The chain is Pyridoxine/pyridoxamine 5'-phosphate oxidase from Gloeothece citriformis (strain PCC 7424) (Cyanothece sp. (strain PCC 7424)).